Consider the following 214-residue polypeptide: Adenylate kinase (214 aa).

10–15 contributes to the ATP binding site; sequence GAGKGT. The segment at 30–59 is NMP; it reads STGDMFRAALKNQTPLGLKAKEYMDKGELV. Residues Thr-31, Arg-36, 57–59, 85–88, and Gln-92 contribute to the AMP site; these read ELV and GFPR. Positions 126–163 are LID; that stretch reads GRRVCRQCGATYHVKFNPPKVEGVCDACGGELYQRSDD. Position 127 (Arg-127) interacts with ATP. Positions 130 and 133 each coordinate Zn(2+). 136 to 137 is an ATP binding site; the sequence is TY. Positions 150 and 153 each coordinate Zn(2+). 2 residues coordinate AMP: Arg-160 and Arg-171. Lys-199 provides a ligand contact to ATP.

It belongs to the adenylate kinase family. As to quaternary structure, monomer.

It is found in the cytoplasm. The enzyme catalyses AMP + ATP = 2 ADP. The protein operates within purine metabolism; AMP biosynthesis via salvage pathway; AMP from ADP: step 1/1. Functionally, catalyzes the reversible transfer of the terminal phosphate group between ATP and AMP. Plays an important role in cellular energy homeostasis and in adenine nucleotide metabolism. The sequence is that of Adenylate kinase from Carboxydothermus hydrogenoformans (strain ATCC BAA-161 / DSM 6008 / Z-2901).